The following is a 214-amino-acid chain: Calcineurin B homologous protein 3 (214 aa).

The N-myristoyl glycine moiety is linked to residue G2. One can recognise an EF-hand domain in the interval 110–145 (FRKEKLKFLFHMYDADYDGIITLQEYKNVLDELMSG). 4 residues coordinate Ca(2+): D123, D125, D127, and E134.

This sequence belongs to the calcineurin regulatory subunit family. CHP subfamily. As to quaternary structure, monomer. Homodimer. Expressed in the bipotential gonad by E4.5 and expressed in both the testis and ovary by E5.5, but with expression higher in the testis. Expressed in the testis cords but also at low levels in the interstitium. In the ovary, expression is principally in the ovarian cortex, but also in the medulla. Also expressed in the embryonic brain, with expression highest in the region between the nasal placode and olfactory bulb. Also expressed in the embryonic heart and tail.

It localises to the nucleus. The protein localises to the cytoplasm. It is found in the membrane. Its subcellular location is the cell membrane. The protein resides in the cell projection. It localises to the lamellipodium. The protein localises to the ruffle membrane. In terms of biological role, functions as an integral cofactor in cell pH regulation by controlling plasma membrane-type Na(+)/H(+) exchange activity. Promotes the induction of hematopoietic stem cell differentiation toward megakaryocytic lineage. Essential for the coupling of ERK cascade activation with the expression of ETS family genes in megakaryocytic differentiation. Also involved in granulocytic differentiation in a ERK-dependent manner. Inhibits the phosphatase activity of calcineurin. The sequence is that of Calcineurin B homologous protein 3 from Gallus gallus (Chicken).